Here is a 510-residue protein sequence, read N- to C-terminus: RanBP-type and C3HC4-type zinc finger-containing protein 1 (510 aa).

At Met-1 the chain carries N-acetylmethionine. Residues Met-1–Arg-220 form an interaction with IRF3 region. Residues Met-1–Gln-270 are interaction with TAB2. Position 50 is a phosphoserine (Ser-50). The 65-residue stretch at Ile-55 to Val-119 folds into the Ubiquitin-like domain. The interaction with RNF31 stretch occupies residues Val-69–Leu-131. Residues Leu-160–Pro-192 form a disordered region. Residues Pro-167 to Pro-178 are compositionally biased toward pro residues. Residues Pro-193–Glu-222 form a RanBP2-type zinc finger. Residues Asp-233–Asn-261 adopt a coiled-coil conformation. The segment at Glu-278–Cys-506 is TRIAD supradomain. Zn(2+)-binding residues include Cys-282, Cys-285, Cys-300, His-302, Cys-305, Cys-308, and Cys-323. The RING-type 1 zinc finger occupies Cys-282–Cys-332. Phosphotyrosine is present on Tyr-330. Zn(2+) is bound by residues Cys-332, Cys-371, Cys-376, Cys-391, Cys-394, Cys-399, Cys-402, His-406, Cys-411, Cys-447, and Cys-450. Residues Gln-351–Cys-411 form an IBR-type zinc finger. An RING-type 2; atypical zinc finger spans residues Cys-447 to Thr-476. The active site involves Cys-460. Cys-465 and Cys-468 together coordinate Zn(2+).

It belongs to the RBR family. Component of the LUBAC complex (linear ubiquitin chain assembly complex) which consists of SHARPIN, RBCK1 and RNF31. LUBAC has a MW of approximately 600 kDa suggesting a heteromultimeric assembly of its subunits. Interacts with beta-I-type (PRKCB1) and zeta-type protein kinase C (PRKCZ). Interacts with UBE2L3. Interacts with PRKCH. Associates with the TNF-R1 signaling complex (TNF-RSC) in a stimulation-dependent manner. Interacts with EYA1, TAB2, TAB3, MAP3K7 TRAF6 and RIPK1. Interacts with IRF3. As to quaternary structure, interacts with IREB2 only in iron-rich conditions. In terms of assembly, (Microbial infection) Interacts with hepatitis B virus/HBV protein HBx; this interaction is required to activate transcription of the viral genome. In terms of processing, auto-ubiquitinated. Auto-ubiquitination leads to degradation by the proteasome. Phosphorylated. In vitro, phosphorylation inhibits auto-ubiquitination activity. Post-translationally, (Microbial infection) Ubiquitinated by S.flexneri E3 ubiquitin-protein ligases IpaH1.4 and IpaH2.5, leading to its degradation by the proteasome, thereby preventing formation of the bacterial ubiquitin coat and activation of innate immunity.

The catalysed reaction is [E2 ubiquitin-conjugating enzyme]-S-ubiquitinyl-L-cysteine + [acceptor protein]-L-lysine = [E2 ubiquitin-conjugating enzyme]-L-cysteine + [acceptor protein]-N(6)-ubiquitinyl-L-lysine.. It participates in protein modification; protein ubiquitination. In terms of biological role, E3 ubiquitin-protein ligase, which accepts ubiquitin from specific E2 ubiquitin-conjugating enzymes, such as UBE2L3/UBCM4, and then transfers it to substrates. Functions as an E3 ligase for oxidized IREB2 and both heme and oxygen are necessary for IREB2 ubiquitination. Promotes ubiquitination of TAB2 and IRF3 and their degradation by the proteasome. Component of the LUBAC complex which conjugates linear ('Met-1'-linked) polyubiquitin chains to substrates and plays a key role in NF-kappa-B activation and regulation of inflammation. LUBAC conjugates linear polyubiquitin to IKBKG and RIPK1 and is involved in activation of the canonical NF-kappa-B and the JNK signaling pathways. Linear ubiquitination mediated by the LUBAC complex interferes with TNF-induced cell death and thereby prevents inflammation. LUBAC is recruited to the TNF-R1 signaling complex (TNF-RSC) following polyubiquitination of TNF-RSC components by BIRC2 and/or BIRC3 and to conjugate linear polyubiquitin to IKBKG and possibly other components contributing to the stability of the complex. The LUBAC complex is also involved in innate immunity by conjugating linear polyubiquitin chains at the surface of bacteria invading the cytosol to form the ubiquitin coat surrounding bacteria. LUBAC is not able to initiate formation of the bacterial ubiquitin coat, and can only promote formation of linear polyubiquitins on pre-existing ubiquitin. The bacterial ubiquitin coat acts as an 'eat-me' signal for xenophagy and promotes NF-kappa-B activation. Together with OTULIN, the LUBAC complex regulates the canonical Wnt signaling during angiogenesis. Binds polyubiquitin of different linkage types. This is RanBP-type and C3HC4-type zinc finger-containing protein 1 (RBCK1) from Homo sapiens (Human).